A 429-amino-acid polypeptide reads, in one-letter code: C4-dicarboxylate transport protein (429 aa).

Helical transmembrane passes span 9–29 (VLYVQVIFAIIVGVILGHFYP), 45–65 (LIKMVIGPIIFCTVVTGIAGM), 79–99 (LLYFEVVSTFALLLGLAATHI), 149–169 (GEILQILLIALLFGSVLAHLG), 185–205 (VLFGIVHIVTKLAPIGAFGAM), 223–243 (LIGTFYLTSIVFVLVVLGTIA), 308–328 (IYMTMAVLFIAQATNIELTWM), and 356–376 (AATLAVVPTIPLSGMVLILGI).

Belongs to the dicarboxylate/amino acid:cation symporter (DAACS) (TC 2.A.23) family.

The protein localises to the cell inner membrane. Functionally, responsible for the transport of dicarboxylates such as succinate, fumarate, and malate from the periplasm across the membrane. This Burkholderia ambifaria (strain MC40-6) protein is C4-dicarboxylate transport protein.